The primary structure comprises 938 residues: Isoleucine--tRNA ligase (938 aa).

The 'HIGH' region motif lies at 58–68 (PYANGNIHIGH). Glu-562 contacts L-isoleucyl-5'-AMP. The short motif at 603-607 (KMSKS) is the 'KMSKS' region element. Lys-606 is an ATP binding site. Zn(2+) is bound by residues Cys-901, Cys-904, Cys-921, and Cys-924.

The protein belongs to the class-I aminoacyl-tRNA synthetase family. IleS type 1 subfamily. As to quaternary structure, monomer. It depends on Zn(2+) as a cofactor.

It is found in the cytoplasm. It catalyses the reaction tRNA(Ile) + L-isoleucine + ATP = L-isoleucyl-tRNA(Ile) + AMP + diphosphate. In terms of biological role, catalyzes the attachment of isoleucine to tRNA(Ile). As IleRS can inadvertently accommodate and process structurally similar amino acids such as valine, to avoid such errors it has two additional distinct tRNA(Ile)-dependent editing activities. One activity is designated as 'pretransfer' editing and involves the hydrolysis of activated Val-AMP. The other activity is designated 'posttransfer' editing and involves deacylation of mischarged Val-tRNA(Ile). This chain is Isoleucine--tRNA ligase, found in Actinobacillus pleuropneumoniae serotype 7 (strain AP76).